The following is a 347-amino-acid chain: Phosphoribosylformylglycinamidine cyclo-ligase (347 aa).

Belongs to the AIR synthase family.

It is found in the cytoplasm. It catalyses the reaction 2-formamido-N(1)-(5-O-phospho-beta-D-ribosyl)acetamidine + ATP = 5-amino-1-(5-phospho-beta-D-ribosyl)imidazole + ADP + phosphate + H(+). The protein operates within purine metabolism; IMP biosynthesis via de novo pathway; 5-amino-1-(5-phospho-D-ribosyl)imidazole from N(2)-formyl-N(1)-(5-phospho-D-ribosyl)glycinamide: step 2/2. The sequence is that of Phosphoribosylformylglycinamidine cyclo-ligase from Bacillus cytotoxicus (strain DSM 22905 / CIP 110041 / 391-98 / NVH 391-98).